The sequence spans 202 residues: Small ribosomal subunit protein uS4 (202 aa).

A disordered region spans residues 16 to 43 (GELPGLSRKTPRRAYPPGQHGQGRRKRS). The 63-residue stretch at 90–152 (MRLDNTVFRL…DNSRRMVETN (63 aa)) folds into the S4 RNA-binding domain.

It belongs to the universal ribosomal protein uS4 family. Part of the 30S ribosomal subunit. Contacts protein S5. The interaction surface between S4 and S5 is involved in control of translational fidelity.

Functionally, one of the primary rRNA binding proteins, it binds directly to 16S rRNA where it nucleates assembly of the body of the 30S subunit. With S5 and S12 plays an important role in translational accuracy. The sequence is that of Small ribosomal subunit protein uS4 from Crocosphaera subtropica (strain ATCC 51142 / BH68) (Cyanothece sp. (strain ATCC 51142)).